The sequence spans 212 residues: Protein GrpE (212 aa).

The segment at methionine 1–glutamate 68 is disordered. A compositionally biased stretch (basic and acidic residues) spans threonine 9 to leucine 30. Residues glutamate 40 to leucine 60 are compositionally biased toward low complexity.

The protein belongs to the GrpE family. Homodimer.

Its subcellular location is the cytoplasm. Participates actively in the response to hyperosmotic and heat shock by preventing the aggregation of stress-denatured proteins, in association with DnaK and GrpE. It is the nucleotide exchange factor for DnaK and may function as a thermosensor. Unfolded proteins bind initially to DnaJ; upon interaction with the DnaJ-bound protein, DnaK hydrolyzes its bound ATP, resulting in the formation of a stable complex. GrpE releases ADP from DnaK; ATP binding to DnaK triggers the release of the substrate protein, thus completing the reaction cycle. Several rounds of ATP-dependent interactions between DnaJ, DnaK and GrpE are required for fully efficient folding. This chain is Protein GrpE, found in Leptospira interrogans serogroup Icterohaemorrhagiae serovar copenhageni (strain Fiocruz L1-130).